We begin with the raw amino-acid sequence, 449 residues long: Tubulin alpha chain (449 aa).

Residues 1–4 (MREC) carry the MREC motif motif. Gln-11 contacts GTP. The residue at position 40 (Lys-40) is an N6-acetyllysine. GTP-binding residues include Glu-71, Ser-140, Gly-144, Thr-145, Thr-179, Asn-206, and Asn-228. Residue Glu-71 participates in Mg(2+) binding. Glu-254 is a catalytic residue. The interval 430–449 (KDYEEVGADSADAEDEGEEY) is disordered. Acidic residues predominate over residues 431–449 (DYEEVGADSADAEDEGEEY).

The protein belongs to the tubulin family. Dimer of alpha and beta chains. A typical microtubule is a hollow water-filled tube with an outer diameter of 25 nm and an inner diameter of 15 nM. Alpha-beta heterodimers associate head-to-tail to form protofilaments running lengthwise along the microtubule wall with the beta-tubulin subunit facing the microtubule plus end conferring a structural polarity. Microtubules usually have 13 protofilaments but different protofilament numbers can be found in some organisms and specialized cells. Mg(2+) is required as a cofactor. Post-translationally, some glutamate residues at the C-terminus are polyglycylated, resulting in polyglycine chains on the gamma-carboxyl group. Glycylation is mainly limited to tubulin incorporated into axonemes (cilia and flagella) whereas glutamylation is prevalent in neuronal cells, centrioles, axonemes, and the mitotic spindle. Both modifications can coexist on the same protein on adjacent residues, and lowering polyglycylation levels increases polyglutamylation, and reciprocally. The precise function of polyglycylation is still unclear. Some glutamate residues at the C-terminus are polyglutamylated, resulting in polyglutamate chains on the gamma-carboxyl group. Polyglutamylation plays a key role in microtubule severing by spastin (SPAST). SPAST preferentially recognizes and acts on microtubules decorated with short polyglutamate tails: severing activity by SPAST increases as the number of glutamates per tubulin rises from one to eight, but decreases beyond this glutamylation threshold. In terms of processing, acetylation of alpha chains at Lys-40 is located inside the microtubule lumen. This modification has been correlated with increased microtubule stability, intracellular transport and ciliary assembly. Post-translationally, undergoes a tyrosination/detyrosination cycle, the cyclic removal and re-addition of a C-terminal tyrosine residue by the enzymes tubulin tyrosine carboxypeptidase (MATCAP1, VASH1 or VASH2) and tubulin tyrosine ligase (TTL), respectively. Tyrosination promotes microtubule interaction with CAP-Gly microtubule plus-end tracking proteins. Tyrosinated tubulins regulate the initiation of dynein-driven motility. In terms of processing, detyrosination is involved in metaphase plate congression by guiding chromosomes during mitosis. Detyrosination increases microtubules-dependent mechanotransduction in dystrophic cardiac and skeletal muscle. In cardiomyocytes, detyrosinated microtubules are required to resist to contractile compression during contraction.

Its subcellular location is the cytoplasm. It localises to the cytoskeleton. It catalyses the reaction GTP + H2O = GDP + phosphate + H(+). In terms of biological role, tubulin is the major constituent of microtubules, a cylinder consisting of laterally associated linear protofilaments composed of alpha- and beta-tubulin heterodimers. Microtubules grow by the addition of GTP-tubulin dimers to the microtubule end, where a stabilizing cap forms. Below the cap, tubulin dimers are in GDP-bound state, owing to GTPase activity of alpha-tubulin. The sequence is that of Tubulin alpha chain (tuba) from Xenopus laevis (African clawed frog).